We begin with the raw amino-acid sequence, 427 residues long: Enolase (427 aa).

Glutamine 162 provides a ligand contact to (2R)-2-phosphoglycerate. Glutamate 204 (proton donor) is an active-site residue. Mg(2+) is bound by residues aspartate 241, glutamate 282, and aspartate 309. Lysine 334, arginine 363, serine 364, and lysine 385 together coordinate (2R)-2-phosphoglycerate. Lysine 334 functions as the Proton acceptor in the catalytic mechanism.

Belongs to the enolase family. Mg(2+) serves as cofactor.

It is found in the cytoplasm. It localises to the secreted. The protein localises to the cell surface. The enzyme catalyses (2R)-2-phosphoglycerate = phosphoenolpyruvate + H2O. Its pathway is carbohydrate degradation; glycolysis; pyruvate from D-glyceraldehyde 3-phosphate: step 4/5. Functionally, catalyzes the reversible conversion of 2-phosphoglycerate (2-PG) into phosphoenolpyruvate (PEP). It is essential for the degradation of carbohydrates via glycolysis. This Frankia alni (strain DSM 45986 / CECT 9034 / ACN14a) protein is Enolase.